The primary structure comprises 408 residues: Acetate kinase (408 aa).

Asn10 is a binding site for Mg(2+). An ATP-binding site is contributed by Lys17. Arg96 serves as a coordination point for substrate. Residue Asp153 is the Proton donor/acceptor of the active site. ATP contacts are provided by residues 213–217 and 288–290; these read HLGNG and DLR. Position 393 (Glu393) interacts with Mg(2+).

Belongs to the acetokinase family. As to quaternary structure, homodimer. It depends on Mg(2+) as a cofactor. Mn(2+) serves as cofactor.

The protein resides in the cytoplasm. The enzyme catalyses acetate + ATP = acetyl phosphate + ADP. The protein operates within metabolic intermediate biosynthesis; acetyl-CoA biosynthesis; acetyl-CoA from acetate: step 1/2. In terms of biological role, catalyzes the formation of acetyl phosphate from acetate and ATP. Can also catalyze the reverse reaction. This Borrelia recurrentis (strain A1) protein is Acetate kinase.